A 227-amino-acid polypeptide reads, in one-letter code: Uracil-DNA glycosylase (227 aa).

Residue Asp64 is the Proton acceptor of the active site.

It belongs to the uracil-DNA glycosylase (UDG) superfamily. UNG family.

The protein resides in the cytoplasm. It carries out the reaction Hydrolyzes single-stranded DNA or mismatched double-stranded DNA and polynucleotides, releasing free uracil.. Its function is as follows. Excises uracil residues from the DNA which can arise as a result of misincorporation of dUMP residues by DNA polymerase or due to deamination of cytosine. This chain is Uracil-DNA glycosylase, found in Alkaliphilus metalliredigens (strain QYMF).